The chain runs to 378 residues: Spermidine/putrescine import ATP-binding protein PotA (378 aa).

Residues 18-248 (VQLAGIRKCF…PKNLFVAGFI (231 aa)) enclose the ABC transporter domain. Residue 50 to 57 (GPSGCGKT) coordinates ATP.

Belongs to the ABC transporter superfamily. Spermidine/putrescine importer (TC 3.A.1.11.1) family. In terms of assembly, the complex is composed of two ATP-binding proteins (PotA), two transmembrane proteins (PotB and PotC) and a solute-binding protein (PotD).

It localises to the cell inner membrane. It catalyses the reaction ATP + H2O + polyamine-[polyamine-binding protein]Side 1 = ADP + phosphate + polyamineSide 2 + [polyamine-binding protein]Side 1.. Its function is as follows. Part of the ABC transporter complex PotABCD involved in spermidine/putrescine import. Responsible for energy coupling to the transport system. The polypeptide is Spermidine/putrescine import ATP-binding protein PotA (Escherichia coli O1:K1 / APEC).